Reading from the N-terminus, the 208-residue chain is ATP phosphoribosyltransferase (208 aa).

This sequence belongs to the ATP phosphoribosyltransferase family. Short subfamily. As to quaternary structure, heteromultimer composed of HisG and HisZ subunits.

The protein localises to the cytoplasm. The enzyme catalyses 1-(5-phospho-beta-D-ribosyl)-ATP + diphosphate = 5-phospho-alpha-D-ribose 1-diphosphate + ATP. It participates in amino-acid biosynthesis; L-histidine biosynthesis; L-histidine from 5-phospho-alpha-D-ribose 1-diphosphate: step 1/9. Its function is as follows. Catalyzes the condensation of ATP and 5-phosphoribose 1-diphosphate to form N'-(5'-phosphoribosyl)-ATP (PR-ATP). Has a crucial role in the pathway because the rate of histidine biosynthesis seems to be controlled primarily by regulation of HisG enzymatic activity. This is ATP phosphoribosyltransferase from Lactococcus lactis subsp. cremoris (strain MG1363).